The following is a 114-amino-acid chain: Iron-sulfur cluster insertion protein ErpA (114 aa).

Iron-sulfur cluster is bound by residues cysteine 42, cysteine 106, and cysteine 108.

Belongs to the HesB/IscA family. In terms of assembly, homodimer. The cofactor is iron-sulfur cluster.

Required for insertion of 4Fe-4S clusters for at least IspG. This is Iron-sulfur cluster insertion protein ErpA from Cronobacter sakazakii (strain ATCC BAA-894) (Enterobacter sakazakii).